Consider the following 283-residue polypeptide: tRNA dimethylallyltransferase (283 aa).

The segment at 5–8 is interaction with substrate tRNA; it reads DSML.

The protein belongs to the IPP transferase family. Monomer. Mg(2+) is required as a cofactor.

The catalysed reaction is adenosine(37) in tRNA + dimethylallyl diphosphate = N(6)-dimethylallyladenosine(37) in tRNA + diphosphate. In terms of biological role, catalyzes the transfer of a dimethylallyl group onto the adenine at position 37 in tRNAs that read codons beginning with uridine, leading to the formation of N6-(dimethylallyl)adenosine (i(6)A). This chain is tRNA dimethylallyltransferase, found in Desulforamulus reducens (strain ATCC BAA-1160 / DSM 100696 / MI-1) (Desulfotomaculum reducens).